Reading from the N-terminus, the 291-residue chain is MFEGAMPALITPFTKDDRIDREGLRRNIAFVEEGGVSGIVPCGTTGESATLSALEHEEVIDIAVECAKVPVVAGTGSNNTGEALQFTKHAADAGVDGVLLISPYYNKPNPAGLLAHFKKIAEAVDIPMILYNVPSRTGQDMPVDVITKLAKVENIVGIKEASGSVGKVSQILEQTIDDDFVVLSGEDGLTLPIISVGGSGVISVAANIVPDKMSGMVSAALKGDYETARKIHFEIAPLIRALFLETNPIPAKKAAELIGLASGHLRLPLAPMSDANQLKLVTELKKLGVMK.

Position 45 (T45) interacts with pyruvate. The Proton donor/acceptor role is filled by Y131. Residue K159 is the Schiff-base intermediate with substrate of the active site. Position 202 (I202) interacts with pyruvate.

This sequence belongs to the DapA family. As to quaternary structure, homotetramer; dimer of dimers.

It is found in the cytoplasm. The catalysed reaction is L-aspartate 4-semialdehyde + pyruvate = (2S,4S)-4-hydroxy-2,3,4,5-tetrahydrodipicolinate + H2O + H(+). The protein operates within amino-acid biosynthesis; L-lysine biosynthesis via DAP pathway; (S)-tetrahydrodipicolinate from L-aspartate: step 3/4. Catalyzes the condensation of (S)-aspartate-beta-semialdehyde [(S)-ASA] and pyruvate to 4-hydroxy-tetrahydrodipicolinate (HTPA). This is 4-hydroxy-tetrahydrodipicolinate synthase from Methanosarcina acetivorans (strain ATCC 35395 / DSM 2834 / JCM 12185 / C2A).